Reading from the N-terminus, the 404-residue chain is CinA-like protein (404 aa).

This sequence belongs to the CinA family.

The chain is CinA-like protein from Deinococcus radiodurans (strain ATCC 13939 / DSM 20539 / JCM 16871 / CCUG 27074 / LMG 4051 / NBRC 15346 / NCIMB 9279 / VKM B-1422 / R1).